The primary structure comprises 172 residues: C-phycocyanin beta chain (172 aa).

At asparagine 72 the chain carries N4-methylasparagine. Residues cysteine 82 and cysteine 153 each coordinate (2R,3E)-phycocyanobilin.

This sequence belongs to the phycobiliprotein family. As to quaternary structure, heterodimer of an alpha and a beta subunit, which further assembles into trimers and the trimers into hexamers. The basic functional unit of phycobiliproteins is a ring-shaped hexamer formed from two back-to-back trimers contacting via the alpha chain subunits. The trimers are composed of alpha/beta subunit heterodimers arranged around a three-fold axis of symmetry. The phycoerythrins also contain a gamma subunit which is located in the center of the hexamer. Post-translationally, contains two covalently linked bilin chromophores.

Its subcellular location is the plastid. The protein localises to the chloroplast thylakoid membrane. Its function is as follows. Light-harvesting photosynthetic bile pigment-protein from the phycobiliprotein complex (phycobilisome, PBS). Phycocyanin is the major phycobiliprotein in the PBS rod. This Pyropia haitanensis (Red seaweed) protein is C-phycocyanin beta chain (cpcB).